The primary structure comprises 333 residues: GTP 3',8-cyclase (333 aa).

The Radical SAM core domain maps to 7–221 (KFGRVHDYIR…FEACNEAGYE (215 aa)). R16 is a binding site for GTP. C23 and C27 together coordinate [4Fe-4S] cluster. Residue Y29 coordinates S-adenosyl-L-methionine. C30 provides a ligand contact to [4Fe-4S] cluster. GTP is bound at residue R66. Position 70 (G70) interacts with S-adenosyl-L-methionine. T97 provides a ligand contact to GTP. S121 contributes to the S-adenosyl-L-methionine binding site. K158 contacts GTP. Residue M192 coordinates S-adenosyl-L-methionine. Residues C257 and C260 each contribute to the [4Fe-4S] cluster site. Residue 262-264 (RLR) coordinates GTP. C274 serves as a coordination point for [4Fe-4S] cluster.

Belongs to the radical SAM superfamily. MoaA family. Monomer and homodimer. Requires [4Fe-4S] cluster as cofactor.

It catalyses the reaction GTP + AH2 + S-adenosyl-L-methionine = (8S)-3',8-cyclo-7,8-dihydroguanosine 5'-triphosphate + 5'-deoxyadenosine + L-methionine + A + H(+). The protein operates within cofactor biosynthesis; molybdopterin biosynthesis. Catalyzes the cyclization of GTP to (8S)-3',8-cyclo-7,8-dihydroguanosine 5'-triphosphate. The protein is GTP 3',8-cyclase of Listeria monocytogenes serovar 1/2a (strain ATCC BAA-679 / EGD-e).